The primary structure comprises 715 residues: Polyribonucleotide nucleotidyltransferase (715 aa).

Residues aspartate 490 and aspartate 496 each contribute to the Mg(2+) site. Residues proline 557–isoleucine 616 enclose the KH domain. The S1 motif domain maps to glycine 626 to lysine 694.

Belongs to the polyribonucleotide nucleotidyltransferase family. Mg(2+) is required as a cofactor.

The protein localises to the cytoplasm. It carries out the reaction RNA(n+1) + phosphate = RNA(n) + a ribonucleoside 5'-diphosphate. Functionally, involved in mRNA degradation. Catalyzes the phosphorolysis of single-stranded polyribonucleotides processively in the 3'- to 5'-direction. This Paracoccus denitrificans (strain Pd 1222) protein is Polyribonucleotide nucleotidyltransferase.